The primary structure comprises 306 residues: RNA-binding protein Raly (306 aa).

The residue at position 2 (serine 2) is an N-acetylserine. Lysine 4 participates in a covalent cross-link: Glycyl lysine isopeptide (Lys-Gly) (interchain with G-Cter in SUMO2). In terms of domain architecture, RRM spans 21–92; the sequence is SRVFIGNLNT…QTLDINMAGE (72 aa). An N6-acetyllysine modification is found at lysine 44. Serine 63 carries the post-translational modification Phosphoserine. Residues lysine 94 and lysine 99 each participate in a glycyl lysine isopeptide (Lys-Gly) (interchain with G-Cter in SUMO2) cross-link. Phosphoserine is present on residues serine 106 and serine 135. Lysine 159 participates in a covalent cross-link: Glycyl lysine isopeptide (Lys-Gly) (interchain with G-Cter in SUMO2). Lysine 165 is modified (N6-acetyllysine; alternate). Lysine 165 participates in a covalent cross-link: Glycyl lysine isopeptide (Lys-Gly) (interchain with G-Cter in SUMO2); alternate. Residues lysine 179 and lysine 191 each participate in a glycyl lysine isopeptide (Lys-Gly) (interchain with G-Cter in SUMO2) cross-link. Residues 183–216 are a coiled coil; the sequence is KSSELQAIKTELTQIKSNIDALLSRLEQIAAEQK. The disordered stretch occupies residues 215 to 306; the sequence is QKANPDGKKK…DTDADDGALQ (92 aa). A compositionally biased stretch (basic and acidic residues) spans 217–226; the sequence is ANPDGKKKGD. Residues 227-252 are compositionally biased toward gly residues; sequence GGGAGGGGGGGGSGGGGSGGGGGGGS. An epitope (recognized by BKRF1 antibodies) region spans residues 227–253; the sequence is GGGAGGGGGGGGSGGGGSGGGGGGGSS. A Phosphothreonine modification is found at threonine 262. Serine 264 is subject to Phosphoserine. Threonine 286 carries the phosphothreonine modification. Positions 287 to 297 are enriched in basic and acidic residues; that stretch reads HSEEELEHSQD. Phosphoserine is present on residues serine 288 and serine 295. A Phosphothreonine modification is found at threonine 298.

Belongs to the RRM HNRPC family. RALY subfamily. In terms of assembly, identified in the spliceosome C complex. Interacts (through its RNA-binding domain) with FUS (through its RNA-binding domain); both are components of the same RNPs. As to expression, expressed in heart, brain, lung, liver, skeletal muscle, kidney and pancreas. Weakly expressed in placenta.

The protein resides in the nucleus. RNA-binding protein that acts as a transcriptional cofactor for cholesterol biosynthetic genes in the liver. Binds the lipid-responsive non-coding RNA LeXis and is required for LeXis-mediated effect on cholesterogenesis. May be a heterogeneous nuclear ribonucleoprotein (hnRNP). The chain is RNA-binding protein Raly (RALY) from Homo sapiens (Human).